Reading from the N-terminus, the 196-residue chain is MAIDVKAIEEHIRGILIALGDNPEREGLKDTPKRVAKMYEEVFKGMCYSNDEIAEMFNITFEDDLCINDNENDMVFMKEIEIFSHCEHHLALMYNMKVAIAYIPKGKIIGLSKMARIADMVGRRLQLQERIGSDIAEILQKITGSEDVAVIIEGEHGCMTTRGIKKSGTKTITTTLRGKFNTDPIISNKLMMLYTK.

Residues cysteine 86, histidine 89, and cysteine 158 each contribute to the Zn(2+) site.

This sequence belongs to the GTP cyclohydrolase I family. Homomer.

The enzyme catalyses GTP + H2O = 7,8-dihydroneopterin 3'-triphosphate + formate + H(+). The protein operates within cofactor biosynthesis; 7,8-dihydroneopterin triphosphate biosynthesis; 7,8-dihydroneopterin triphosphate from GTP: step 1/1. This is GTP cyclohydrolase 1 from Clostridium botulinum (strain Loch Maree / Type A3).